Here is a 73-residue protein sequence, read N- to C-terminus: U3-agatoxin-Ao1j (73 aa).

An N-terminal signal peptide occupies residues 1–20 (MRTIISLLLLSAMVFAVIEA). Positions 21–34 (ISLEEGLQLFEGER) are excised as a propeptide. 4 disulfide bridges follow: cysteine 36/cysteine 52, cysteine 43/cysteine 57, cysteine 51/cysteine 67, and cysteine 59/cysteine 65. Serine 71 bears the Serine amide mark.

Belongs to the neurotoxin 07 (Beta/delta-agtx) family. 03 (aga-4) subfamily. Aga sub-subfamily. Expressed by the venom gland.

The protein resides in the secreted. In terms of biological role, insecticidal neurotoxin that induces an irreversible spastic paralysis when injected into insects. Modifies presynaptic voltage-gated sodium channels (Nav), causing them to open at the normal resting potential of the nerve. This leads to spontaneous release of neurotransmitter and repetitive action potentials in motor neurons. This is U3-agatoxin-Ao1j from Agelena orientalis (Funnel-web spider).